We begin with the raw amino-acid sequence, 142 residues long: 2-aminomuconate deaminase (142 aa).

Belongs to the 2-aminomuconate deaminase family. As to quaternary structure, homotetramer.

It catalyses the reaction (2Z,4E)-2-aminomuconate + H2O = (3E)-2-oxohex-3-enedioate + NH4(+). With respect to regulation, slightly inhibited by Pb(2+), Hg(+) and Cu(2+). Involved in the modified meta-cleavage pathway for the 2-aminophenol catabolism. Only active toward 2-aminomuconic acid. The sequence is that of 2-aminomuconate deaminase (amnD) from Pseudomonas sp.